The primary structure comprises 194 residues: Peptidyl-tRNA hydrolase (194 aa).

Position 17 (Tyr17) interacts with tRNA. His22 serves as the catalytic Proton acceptor. Phe68, Asn70, and Asn116 together coordinate tRNA.

Belongs to the PTH family. Monomer.

It localises to the cytoplasm. It carries out the reaction an N-acyl-L-alpha-aminoacyl-tRNA + H2O = an N-acyl-L-amino acid + a tRNA + H(+). Hydrolyzes ribosome-free peptidyl-tRNAs (with 1 or more amino acids incorporated), which drop off the ribosome during protein synthesis, or as a result of ribosome stalling. Its function is as follows. Catalyzes the release of premature peptidyl moieties from peptidyl-tRNA molecules trapped in stalled 50S ribosomal subunits, and thus maintains levels of free tRNAs and 50S ribosomes. In Shewanella woodyi (strain ATCC 51908 / MS32), this protein is Peptidyl-tRNA hydrolase.